An 857-amino-acid polypeptide reads, in one-letter code: Aminopeptidase N (857 aa).

Substrate contacts are provided by residues Glu130 and 264–268 (GAMEN). Zn(2+) is bound at residue His298. Residue Glu299 is the Proton acceptor of the active site. 2 residues coordinate Zn(2+): His302 and Glu321.

It belongs to the peptidase M1 family. Monomer. It depends on Zn(2+) as a cofactor. The N-terminus is blocked.

The protein resides in the cytoplasm. It carries out the reaction Release of an N-terminal amino acid, Xaa-|-Yaa- from a peptide, amide or arylamide. Xaa is preferably Ala, but may be most amino acids including Pro (slow action). When a terminal hydrophobic residue is followed by a prolyl residue, the two may be released as an intact Xaa-Pro dipeptide.. In terms of biological role, aminopeptidase with broad substrate specificity to several peptides. Shows strong preference for leucine but also cleaves next to Arg and Lys in peptide-bond-containing substrates. The sequence is that of Aminopeptidase N (pepN) from Streptomyces lividans.